We begin with the raw amino-acid sequence, 995 residues long: Serine-aspartate repeat-containing protein C (995 aa).

Residues 1–50 form the signal peptide; it reads MNNKKTATNRKGMIPNRLNKFSIRKYSVGTASILVGTTLIFGLSGHEAKA. The YSIRK-G/S signaling motif signature appears at 21–32; the sequence is FSIRKYSVGTAS. The segment at 51–164 is disordered; it reads AEHTNGELNQ…STTPKTTTIK (114 aa). A ligand binding A region region spans residues 51 to 495; it reads AEHTNGELNQ…GSSTANGDQK (445 aa). The span at 56-71 shows a compositional bias: polar residues; sequence GELNQSKNETTAPSEN. The segment covering 72–83 has biased composition (basic and acidic residues); the sequence is KTTKKVDSRQLK. Positions 84 to 155 are enriched in polar residues; the sequence is DNTQTATADQ…SNLTQAKDVS (72 aa). 2 CNA-B domains span residues 496–606 and 607–717; these read KYNL…YKTP and KYSL…EEET. Residues 678–975 form a disordered region; that stretch reads TQTGTNTTED…NNSNNGTLFG (298 aa). 2 stretches are compositionally biased toward acidic residues: residues 685-695 and 712-934; these read TEDDKDADGGE and YYEE…DSDS. Positions 958 to 962 match the LPXTG sorting signal motif; the sequence is LPETG. The segment covering 960–975 has biased composition (low complexity); sequence ETGSENNNSNNGTLFG. A Pentaglycyl murein peptidoglycan amidated threonine modification is found at Thr-961. A propeptide spans 962–995 (removed by sortase); that stretch reads GSENNNSNNGTLFGGLFAALGSLLLFGRRKKQNK.

The protein belongs to the serine-aspartate repeat-containing protein (SDr) family. As to quaternary structure, homodimerizes; via N2-Domain. Interacts with host NRXN1; this interaction mediates bacterial attachment to host cells.

Its subcellular location is the secreted. It is found in the cell wall. Cell surface-associated calcium-binding protein which plays an important role in adhesion and pathogenesis. Mediates interactions with components of the extracellular matrix such as host NRXN1 to promote bacterial adhesion. This chain is Serine-aspartate repeat-containing protein C (sdrC), found in Staphylococcus aureus (strain NCTC 8325 / PS 47).